Reading from the N-terminus, the 279-residue chain is MKSRGAGCSARLLLTVGWLLLAGLQSTCGINVTAIQDPSLAREGEGEPEGDEEPENDSETEKEPQAEAEDDSEGIGIREVILTSGCPGGESKCIVRVEECRGPVDCGWGRPISESLEHVRLACVHTSPENRFKYIWRLLRPDQQAIILANDSAILEVHRDTHPKAFECETLDNNEIVASIRFTIYTTTELQMKRASRPDTDAVLVFVLTIGVIICIFVIFVLIFIIINWTAVKDFWAKASTTEIQSELSSMRYKDSTSLDQSPTDIPGHEDDALSEWNE.

An N-terminal signal peptide occupies residues 1 to 29 (MKSRGAGCSARLLLTVGWLLLAGLQSTCG). Over 30–221 (INVTAIQDPS…VIICIFVIFV (192 aa)) the chain is Extracellular. Asn31 is a glycosylation site (N-linked (GlcNAc...) asparagine). A disordered region spans residues 39–74 (SLAREGEGEPEGDEEPENDSETEKEPQAEAEDDSEG). The span at 46 to 58 (GEPEGDEEPENDS) shows a compositional bias: acidic residues. The helical transmembrane segment at 222–242 (LIFIIINWTAVKDFWAKASTT) threads the bilayer. The Cytoplasmic portion of the chain corresponds to 243–279 (EIQSELSSMRYKDSTSLDQSPTDIPGHEDDALSEWNE). Phosphotyrosine is present on Tyr253. Residues 253-279 (YKDSTSLDQSPTDIPGHEDDALSEWNE) form a disordered region. Phosphoserine is present on residues Ser262 and Ser275.

Interacts with CYLC1; the interaction may be relevant for proper acrosome attachment to the nuclear envelope. In terms of processing, N-glycosylated.

It localises to the cytoplasmic vesicle. Its subcellular location is the secretory vesicle. The protein localises to the acrosome inner membrane. Functionally, plays a role in acrosome expansion and establishment of normal sperm morphology during spermatogenesis. Important for male fertility. This is Sperm acrosome membrane-associated protein 1 (SPACA1) from Bos taurus (Bovine).